We begin with the raw amino-acid sequence, 215 residues long: MGQKINPTGFRLSVLKNWSSRWYANTKKFSVFLNEDINVRQYLQKRLAHASVGSIIIERPSRNAKITIHTSRPGVVIGKKGEDIEILRKNVEKLMNVPVHINIEEIRKPEIDAQLIAASITQQLEKRIMFRRAMKRAIQNAMRLGAQGIKIMSSGRLNGIEIARTEWYREGRVPLHTLRAEVDYGTSEAKTTYGVIGVKVWVFKGEQLSVRDRQN.

Positions 39–107 (VRQYLQKRLA…PVHINIEEIR (69 aa)) constitute a KH type-2 domain.

It belongs to the universal ribosomal protein uS3 family. In terms of assembly, part of the 30S ribosomal subunit. Forms a tight complex with proteins S10 and S14.

Its function is as follows. Binds the lower part of the 30S subunit head. Binds mRNA in the 70S ribosome, positioning it for translation. This Nitrosomonas eutropha (strain DSM 101675 / C91 / Nm57) protein is Small ribosomal subunit protein uS3.